We begin with the raw amino-acid sequence, 511 residues long: Glucans biosynthesis protein G (511 aa).

An N-terminal signal peptide occupies residues 1-22; sequence MMKMRWLSAAVMLTLYTSSSWA.

This sequence belongs to the OpgD/OpgG family.

The protein resides in the periplasm. It participates in glycan metabolism; osmoregulated periplasmic glucan (OPG) biosynthesis. Its function is as follows. Involved in the biosynthesis of osmoregulated periplasmic glucans (OPGs). In Escherichia coli (strain K12 / MC4100 / BW2952), this protein is Glucans biosynthesis protein G.